Here is a 119-residue protein sequence, read N- to C-terminus: Ribonuclease P protein component (119 aa).

It belongs to the RnpA family. As to quaternary structure, consists of a catalytic RNA component (M1 or rnpB) and a protein subunit.

It catalyses the reaction Endonucleolytic cleavage of RNA, removing 5'-extranucleotides from tRNA precursor.. RNaseP catalyzes the removal of the 5'-leader sequence from pre-tRNA to produce the mature 5'-terminus. It can also cleave other RNA substrates such as 4.5S RNA. The protein component plays an auxiliary but essential role in vivo by binding to the 5'-leader sequence and broadening the substrate specificity of the ribozyme. In Shewanella woodyi (strain ATCC 51908 / MS32), this protein is Ribonuclease P protein component.